Here is a 374-residue protein sequence, read N- to C-terminus: tRNA-specific 2-thiouridylase MnmA (374 aa).

ATP contacts are provided by residues 12–19 (GMSGGVDS) and Met-38. Positions 98-100 (NPD) are interaction with target base in tRNA. Residue Cys-103 is the Nucleophile of the active site. Cys-103 and Cys-202 are oxidised to a cystine. An ATP-binding site is contributed by Gly-128. The segment at 152–154 (KDQ) is interaction with tRNA. Cys-202 acts as the Cysteine persulfide intermediate in catalysis. An interaction with tRNA region spans residues 316 to 317 (RY).

Belongs to the MnmA/TRMU family.

The protein localises to the cytoplasm. It carries out the reaction S-sulfanyl-L-cysteinyl-[protein] + uridine(34) in tRNA + AH2 + ATP = 2-thiouridine(34) in tRNA + L-cysteinyl-[protein] + A + AMP + diphosphate + H(+). In terms of biological role, catalyzes the 2-thiolation of uridine at the wobble position (U34) of tRNA, leading to the formation of s(2)U34. The protein is tRNA-specific 2-thiouridylase MnmA of Vibrio parahaemolyticus serotype O3:K6 (strain RIMD 2210633).